The following is a 382-amino-acid chain: 1-deoxy-D-xylulose 5-phosphate reductoisomerase (382 aa).

Residues Ser-10, Gly-11, Ser-12, Ile-13, Gly-36, Lys-37, Asn-38, and Asn-121 each coordinate NADPH. 1-deoxy-D-xylulose 5-phosphate is bound at residue Lys-122. Residue Glu-123 coordinates NADPH. Asp-147 is a Mn(2+) binding site. 4 residues coordinate 1-deoxy-D-xylulose 5-phosphate: Ser-148, Glu-149, Ser-173, and His-196. Glu-149 is a Mn(2+) binding site. Gly-202 is an NADPH binding site. Residues Ser-209, Asn-214, Lys-215, and Glu-218 each coordinate 1-deoxy-D-xylulose 5-phosphate. Glu-218 is a binding site for Mn(2+).

Belongs to the DXR family. It depends on Mg(2+) as a cofactor. The cofactor is Mn(2+).

It carries out the reaction 2-C-methyl-D-erythritol 4-phosphate + NADP(+) = 1-deoxy-D-xylulose 5-phosphate + NADPH + H(+). Its pathway is isoprenoid biosynthesis; isopentenyl diphosphate biosynthesis via DXP pathway; isopentenyl diphosphate from 1-deoxy-D-xylulose 5-phosphate: step 1/6. Its function is as follows. Catalyzes the NADPH-dependent rearrangement and reduction of 1-deoxy-D-xylulose-5-phosphate (DXP) to 2-C-methyl-D-erythritol 4-phosphate (MEP). This chain is 1-deoxy-D-xylulose 5-phosphate reductoisomerase, found in Geobacillus kaustophilus (strain HTA426).